The sequence spans 198 residues: T-cell surface glycoprotein CD3 epsilon chain (198 aa).

Residues 1–21 (MQSGTRWRVLGLCLLSIGVWG) form the signal peptide. At 22–117 (QDGNEEMGSI…RVCENCMEMD (96 aa)) the chain is on the extracellular side. Positions 37-107 (QVSISGTTVI…DASHHLYLKA (71 aa)) constitute an Ig-like domain. A disulfide bond links C49 and C89. A helical membrane pass occupies residues 118-138 (VMAVATIVIVDICITLGLLLL). Residues 139 to 198 (VYYWSKNRKAKAKPVTRGAGAGGRQRGQNKERPPPVPNPDYEPIRKGQQDLYSGLNQRRI) are Cytoplasmic-facing. The interval 152–198 (PVTRGAGAGGRQRGQNKERPPPVPNPDYEPIRKGQQDLYSGLNQRRI) is disordered. The NUMB-binding region stretch occupies residues 166 to 183 (QNKERPPPVPNPDYEPIR). In terms of domain architecture, ITAM spans 169-196 (ERPPPVPNPDYEPIRKGQQDLYSGLNQR). The tract at residues 170–177 (RPPPVPNP) is proline-rich sequence. 2 positions are modified to phosphotyrosine: Y179 and Y190. The segment covering 188 to 198 (DLYSGLNQRRI) has biased composition (polar residues).

As to quaternary structure, the TCR-CD3 complex is composed of a CD3D/CD3E and a CD3G/CD3E heterodimers that preferentially associate with TCRalpha and TCRbeta, respectively, to form TCRalpha/CD3E/CD3G and TCRbeta/CD3G/CD3E trimers. In turn, the hexamer interacts with CD3Z homodimer to form the TCR-CD3 complex. Alternatively, TCRalpha and TCRbeta can be replaced by TCRgamma and TCRdelta. Interacts with CD6. Interacts (via Proline-rich sequence) with NCK1; the interaction is ligand dependent but independent of tyrosine kinase activation. Post-translationally, phosphorylated on Tyr residues after T-cell receptor triggering by LCK in association with CD4/CD8.

It localises to the cell membrane. Part of the TCR-CD3 complex present on T-lymphocyte cell surface that plays an essential role in adaptive immune response. When antigen presenting cells (APCs) activate T-cell receptor (TCR), TCR-mediated signals are transmitted across the cell membrane by the CD3 chains CD3D, CD3E, CD3G and CD3Z. All CD3 chains contain immunoreceptor tyrosine-based activation motifs (ITAMs) in their cytoplasmic domain. Upon TCR engagement, these motifs become phosphorylated by Src family protein tyrosine kinases LCK and FYN, resulting in the activation of downstream signaling pathways. In addition of this role of signal transduction in T-cell activation, CD3E plays an essential role in correct T-cell development. Also participates in internalization and cell surface down-regulation of TCR-CD3 complexes via endocytosis sequences present in CD3E cytosolic region. In addition to its role as a TCR coreceptor, it serves as a receptor for ITPRIPL1. Ligand recognition inhibits T-cell activation by promoting interaction with NCK1, which prevents CD3E-ZAP70 interaction and blocks the ERK-NFkB signaling cascade and calcium influx. The chain is T-cell surface glycoprotein CD3 epsilon chain (CD3E) from Macaca fascicularis (Crab-eating macaque).